The following is a 119-amino-acid chain: Large ribosomal subunit protein bL12 (119 aa).

It belongs to the bacterial ribosomal protein bL12 family. Homodimer. Part of the ribosomal stalk of the 50S ribosomal subunit. Forms a multimeric L10(L12)X complex, where L10 forms an elongated spine to which 2 to 4 L12 dimers bind in a sequential fashion. Binds GTP-bound translation factors.

Forms part of the ribosomal stalk which helps the ribosome interact with GTP-bound translation factors. Is thus essential for accurate translation. The protein is Large ribosomal subunit protein bL12 of Bacillus cytotoxicus (strain DSM 22905 / CIP 110041 / 391-98 / NVH 391-98).